A 305-amino-acid chain; its full sequence is Oxygen-dependent coproporphyrinogen-III oxidase (305 aa).

Ser93 provides a ligand contact to substrate. The a divalent metal cation site is built by His97 and His107. His107 (proton donor) is an active-site residue. 109 to 111 (NVR) contributes to the substrate binding site. A divalent metal cation is bound by residues His146 and His176. Positions 241 to 276 (YVEFNLVYDRGTLFGLQSGGRTESILMSLPPQVRWG) are important for dimerization. Residue 259–261 (GGR) participates in substrate binding.

This sequence belongs to the aerobic coproporphyrinogen-III oxidase family. In terms of assembly, homodimer. A divalent metal cation is required as a cofactor.

It is found in the cytoplasm. The catalysed reaction is coproporphyrinogen III + O2 + 2 H(+) = protoporphyrinogen IX + 2 CO2 + 2 H2O. Its pathway is porphyrin-containing compound metabolism; protoporphyrin-IX biosynthesis; protoporphyrinogen-IX from coproporphyrinogen-III (O2 route): step 1/1. Functionally, involved in the heme biosynthesis. Catalyzes the aerobic oxidative decarboxylation of propionate groups of rings A and B of coproporphyrinogen-III to yield the vinyl groups in protoporphyrinogen-IX. The polypeptide is Oxygen-dependent coproporphyrinogen-III oxidase (Pseudomonas fluorescens (strain ATCC BAA-477 / NRRL B-23932 / Pf-5)).